A 698-amino-acid polypeptide reads, in one-letter code: MAAAGGLPASATLLLLVIAAVAVAPLASAVRPVSDAHRSAAAELFAASPDGSFGDLETTYEAVRTFQILGVEKDKGLIGKACKFAAEKLASSSSSPAKDLFHAARISGVLKCSVDSGVYDDVATRLKAVIKDTNSLLELYYSVGGLLSIKEQGHNVVLPDADNTFHAIKALSQSDGRWRYDTNSAESSTFAAGIALEALSAVISLADSEVDSSMIAVVKNDIVKLFDTIKSYDDGTFYFDEKHVDAAEYKGPITTSASVVRGVTSFAAVASGKLNIPGEKILGLAKFFLGIGLPGSAKDCFNQIESLSFLENNRVFVPLVLSLPSKVFSLTSKDQLKVEVTTVFGSAAPPLRVNLVQVLGSDSKVITTETKELQFDLDNNVHYLDIAPLKIDVGKYSLVFEISLQEQEHETIYATGGTNTEAIFVTGLIKVDKAEIGISDNDAGTVESVQKIDLQKDTSVSLSANHLQKLRLSFQLSTPLGKTFKPHQVFLKLKHDESKVEHLFVVPGSARQFKIVLDFLGLVEKFYYLSGRYDLELAVGDAAMENSFLRALGHIELDLPEAPEKAPKPPAQAVDPFSKFGPKKEISHIFRSPEKRPPKELSFAFTGLTLLPIVGFLIGLMRLGVNLKNFPSLPAPAAFASLFHAGIGAVLLLYVLFWIKLDLFTTLKYLSFLGVFLVFVGHRALSYLSSTSAKQKTA.

The signal sequence occupies residues 1–29; the sequence is MAAAGGLPASATLLLLVIAAVAVAPLASA. The Lumenal segment spans residues 30–600; sequence VRPVSDAHRS…RSPEKRPPKE (571 aa). The chain crosses the membrane as a helical span at residues 601–621; sequence LSFAFTGLTLLPIVGFLIGLM. Topologically, residues 622–638 are cytoplasmic; that stretch reads RLGVNLKNFPSLPAPAA. The chain crosses the membrane as a helical span at residues 639–659; that stretch reads FASLFHAGIGAVLLLYVLFWI. A topological domain (lumenal) is located at residue lysine 660. The chain crosses the membrane as a helical span at residues 661-681; it reads LDLFTTLKYLSFLGVFLVFVG. At 682–698 the chain is on the cytoplasmic side; it reads HRALSYLSSTSAKQKTA.

Belongs to the SWP1 family. Component of the oligosaccharyltransferase (OST) complex.

The protein localises to the endoplasmic reticulum membrane. It participates in protein modification; protein glycosylation. Its function is as follows. Subunit of the oligosaccharyl transferase (OST) complex that catalyzes the initial transfer of a defined glycan (Glc(3)Man(9)GlcNAc(2) in eukaryotes) from the lipid carrier dolichol-pyrophosphate to an asparagine residue within an Asn-X-Ser/Thr consensus motif in nascent polypeptide chains, the first step in protein N-glycosylation. N-glycosylation occurs cotranslationally and the complex associates with the Sec61 complex at the channel-forming translocon complex that mediates protein translocation across the endoplasmic reticulum (ER). All subunits are required for a maximal enzyme activity. The chain is Dolichyl-diphosphooligosaccharide--protein glycosyltransferase subunit 2 (RPN2) from Oryza sativa subsp. japonica (Rice).